Consider the following 207-residue polypeptide: Phenazine biosynthesis protein PhzD (207 aa).

The active-site Proton donor is D38. Substrate-binding positions include Q78, R87, K122, and Y151–G155.

The protein belongs to the isochorismatase family. In terms of assembly, homodimer.

The enzyme catalyses (2S)-2-amino-4-deoxychorismate + H2O = (5S,6S)-6-amino-5-hydroxycyclohexa-1,3-diene-1-carboxyate + pyruvate. It participates in antibiotic biosynthesis; phenazine biosynthesis. Involved in the biosynthesis of the antibiotic phenazine, a nitrogen-containing heterocyclic molecule having important roles in virulence, competition and biological control. Catalyzes the hydrolysis of the vinyl ether functional group of 2-amino-2-deoxyisochorismate (ADIC), yielding pyruvate and trans-2,3-dihydro-3-hydroxyanthranilic acid (DHHA). The polypeptide is Phenazine biosynthesis protein PhzD (Pseudomonas fluorescens).